A 241-amino-acid chain; its full sequence is tRNA pseudouridine synthase A (241 aa).

The active-site Nucleophile is the Asp-52. Tyr-111 is a binding site for substrate.

It belongs to the tRNA pseudouridine synthase TruA family. Homodimer.

It catalyses the reaction uridine(38/39/40) in tRNA = pseudouridine(38/39/40) in tRNA. Formation of pseudouridine at positions 38, 39 and 40 in the anticodon stem and loop of transfer RNAs. This is tRNA pseudouridine synthase A from Ureaplasma parvum serovar 3 (strain ATCC 27815 / 27 / NCTC 11736).